A 138-amino-acid chain; its full sequence is Ribosomal RNA large subunit methyltransferase H (138 aa).

S-adenosyl-L-methionine-binding positions include Leu-57, Gly-86, and 105-110 (LSPLTF).

Belongs to the RNA methyltransferase RlmH family. In terms of assembly, homodimer.

It localises to the cytoplasm. It catalyses the reaction pseudouridine(1915) in 23S rRNA + S-adenosyl-L-methionine = N(3)-methylpseudouridine(1915) in 23S rRNA + S-adenosyl-L-homocysteine + H(+). Specifically methylates the pseudouridine at position 1915 (m3Psi1915) in 23S rRNA. The protein is Ribosomal RNA large subunit methyltransferase H of Prochlorococcus marinus (strain MIT 9312).